Here is a 549-residue protein sequence, read N- to C-terminus: MTVHSTWKEKVQLKKDQLNSKIKDEWKLNSTTITRLKNDKKNLIKNIDDLCSSSENQITHSTIMALRQALEAKELSCHEITAAFCHRAALIHQVVNCLSEIMFSEALRLADYYDSNRPAILPPLYGIPISLKDQCNVEGVDTSLGYLCRTFKPKTKNEESLIVSFLRDLGAIIFVKTTVPSSMMATDTQSNTFGYTYNSINLSFSSGGSSGGEGSLIGAHGSLLGLGTDIGGSIRIPSSYQGLFGLKPTFGRVPYLRVDNSFEGRETIPSVIGPLARDLSDLRYFMSCVINICQPWVQDVKCIPYHFDSSTSKLHDNYVVGIWYGDGVIDPPPSDIRALKTCEDLVNKTKGMKAVKWEPSSELSRELFDLANEADVADSGNEIKNEFEISGEPLLDILKPMVLENGRPPYTVNEWWDLTKRVYNAQQLMRDYYLSFPESERPDVIISPTTLMPFRPGDMLKTTLRYILLFNVLNFPSLSIPVGSVDCQIDGLMDTTSALNPEDKMIKTYWNDLIQSGEIDGFPIGLQVVSPTFNDNEVCKFASWLFSKI.

Residues K132 and S209 each act as charge relay system in the active site. S233 serves as the catalytic Acyl-ester intermediate.

The protein belongs to the amidase family.

The catalysed reaction is a monocarboxylic acid amide + H2O = a monocarboxylate + NH4(+). The sequence is that of Probable amidase (AMD2) from Saccharomyces cerevisiae (strain ATCC 204508 / S288c) (Baker's yeast).